The following is a 310-amino-acid chain: Olfactory receptor 4C11 (310 aa).

Residues 1 to 23 lie on the Extracellular side of the membrane; the sequence is MQQNNSVPEFILLGLTQDPLRQK. Asparagine 4 carries N-linked (GlcNAc...) asparagine glycosylation. A helical transmembrane segment spans residues 24-47; that stretch reads IVFVIFLIFYMGTVVGNMLIIVTI. Topologically, residues 48 to 55 are cytoplasmic; that stretch reads KSSRTLGS. A helical membrane pass occupies residues 56 to 77; the sequence is PMYFFLFYLSFADSCFSTSTAP. Residues 78-98 lie on the Extracellular side of the membrane; the sequence is RLIVDALSEKKIITYNECMTQ. The cysteines at positions 95 and 187 are disulfide-linked. The chain crosses the membrane as a helical span at residues 99 to 118; sequence VFALHLFGCMEIFVLILMAV. Residues 119–137 lie on the Cytoplasmic side of the membrane; the sequence is DRYVAICKPLRYPTIMSQQ. A helical transmembrane segment spans residues 138-156; sequence VCIILIVLAWIGSLIHSTA. Over 157 to 193 the chain is Extracellular; the sequence is QIILALRLPFCGPYLIDHYCCDLQPLLKLACMDTYMI. Residues 194–217 form a helical membrane-spanning segment; the sequence is NLLLVSNSGAICSSSFMILIISYI. Residues 218 to 233 lie on the Cytoplasmic side of the membrane; the sequence is VILHSLRNHSAKGKKK. Residues 234–256 traverse the membrane as a helical segment; the sequence is ALSACTSHIIVVILFFGPCIFIY. At 257-267 the chain is on the extracellular side; the sequence is TRPPTTFPMDK. The chain crosses the membrane as a helical span at residues 268-287; sequence MVAVFYTIGTPFLNPLIYTL. At 288–310 the chain is on the cytoplasmic side; that stretch reads RNAEVKNAMRKLWHGKIISENKG.

Belongs to the G-protein coupled receptor 1 family.

The protein localises to the cell membrane. Functionally, odorant receptor. In Homo sapiens (Human), this protein is Olfactory receptor 4C11 (OR4C11).